The primary structure comprises 610 residues: Dihydroxy-acid dehydratase (610 aa).

Asp81 is a binding site for Mg(2+). Cys122 is a binding site for [2Fe-2S] cluster. Mg(2+) contacts are provided by Asp123 and Lys124. Lys124 carries the N6-carboxylysine modification. [2Fe-2S] cluster is bound at residue Cys193. Glu489 contributes to the Mg(2+) binding site. Catalysis depends on Ser515, which acts as the Proton acceptor.

This sequence belongs to the IlvD/Edd family. As to quaternary structure, homodimer. It depends on [2Fe-2S] cluster as a cofactor. Mg(2+) is required as a cofactor.

The catalysed reaction is (2R)-2,3-dihydroxy-3-methylbutanoate = 3-methyl-2-oxobutanoate + H2O. It carries out the reaction (2R,3R)-2,3-dihydroxy-3-methylpentanoate = (S)-3-methyl-2-oxopentanoate + H2O. Its pathway is amino-acid biosynthesis; L-isoleucine biosynthesis; L-isoleucine from 2-oxobutanoate: step 3/4. It functions in the pathway amino-acid biosynthesis; L-valine biosynthesis; L-valine from pyruvate: step 3/4. Functionally, functions in the biosynthesis of branched-chain amino acids. Catalyzes the dehydration of (2R,3R)-2,3-dihydroxy-3-methylpentanoate (2,3-dihydroxy-3-methylvalerate) into 2-oxo-3-methylpentanoate (2-oxo-3-methylvalerate) and of (2R)-2,3-dihydroxy-3-methylbutanoate (2,3-dihydroxyisovalerate) into 2-oxo-3-methylbutanoate (2-oxoisovalerate), the penultimate precursor to L-isoleucine and L-valine, respectively. This is Dihydroxy-acid dehydratase from Xylella fastidiosa (strain M12).